We begin with the raw amino-acid sequence, 122 residues long: Basic phospholipase A2 F15 (122 aa).

7 disulfide bridges follow: Cys26/Cys115, Cys28/Cys44, Cys43/Cys95, Cys49/Cys122, Cys50/Cys88, Cys57/Cys81, and Cys75/Cys86. Ca(2+)-binding residues include Tyr27, Gly29, and Gly31. Residue His47 is part of the active site. Residue Asp48 coordinates Ca(2+). Asp89 is an active-site residue.

It belongs to the phospholipase A2 family. Group II subfamily. D49 sub-subfamily. As to quaternary structure, when this protein is associated with crotapotin (F5 or F7), it forms the crotoxin protein. It depends on Ca(2+) as a cofactor. Expressed by the venom gland.

It is found in the secreted. It carries out the reaction a 1,2-diacyl-sn-glycero-3-phosphocholine + H2O = a 1-acyl-sn-glycero-3-phosphocholine + a fatty acid + H(+). With respect to regulation, activated by heparin. Inhibited by its chaperone crotapotin. Functionally, snake venom phospholipase A2 (PLA2) that shows moderate neurotoxic activity in isolated mouse phrenic nerve diaphragm but shows high neurotoxic activity in a chick biventer cervis preparation. Also shows a high bactericidal effect against both Gram-negative and Gram-positive bacteria. PLA2 catalyzes the calcium-dependent hydrolysis of the 2-acyl groups in 3-sn-phosphoglycerides. The sequence is that of Basic phospholipase A2 F15 from Crotalus durissus terrificus (South American rattlesnake).